The following is a 191-amino-acid chain: Orotate phosphoribosyltransferase (191 aa).

Residue 116–124 coordinates 5-phospho-alpha-D-ribose 1-diphosphate; sequence EDVVTTGGS. Positions 120 and 148 each coordinate orotate.

It belongs to the purine/pyrimidine phosphoribosyltransferase family. PyrE subfamily. In terms of assembly, homodimer. Requires Mg(2+) as cofactor.

The enzyme catalyses orotidine 5'-phosphate + diphosphate = orotate + 5-phospho-alpha-D-ribose 1-diphosphate. The protein operates within pyrimidine metabolism; UMP biosynthesis via de novo pathway; UMP from orotate: step 1/2. In terms of biological role, catalyzes the transfer of a ribosyl phosphate group from 5-phosphoribose 1-diphosphate to orotate, leading to the formation of orotidine monophosphate (OMP). In Heliobacterium modesticaldum (strain ATCC 51547 / Ice1), this protein is Orotate phosphoribosyltransferase.